We begin with the raw amino-acid sequence, 131 residues long: Small ribosomal subunit protein bS6 (131 aa).

Residues 98-131 are disordered; the sequence is EASPMVKAKDERRERRDDFANETADDADAGDSEE. A compositionally biased stretch (basic and acidic residues) spans 104-116; that stretch reads KAKDERRERRDDF. Over residues 120 to 131 the composition is skewed to acidic residues; sequence TADDADAGDSEE.

Belongs to the bacterial ribosomal protein bS6 family.

Functionally, binds together with bS18 to 16S ribosomal RNA. In Citrobacter koseri (strain ATCC BAA-895 / CDC 4225-83 / SGSC4696), this protein is Small ribosomal subunit protein bS6.